The primary structure comprises 174 residues: MTLILGIDPGSRITGYGVVRDTGRGCEYVASGCIRTGDGPLAERLQIVFRGVSEVIRTHGPVTMGIEQVFMARNADSALKLGQARGAAIVAAVEAGLEISEYTATQVKQAVVGTGAADKQQVQMMVMHLLKLVQKPQIDASDALGIALCHAHHRQSLIPHGLASAKRRGGRLRL.

Residues D8, E67, and D139 contribute to the active site. Mg(2+)-binding residues include D8, E67, and D139.

The protein belongs to the RuvC family. In terms of assembly, homodimer which binds Holliday junction (HJ) DNA. The HJ becomes 2-fold symmetrical on binding to RuvC with unstacked arms; it has a different conformation from HJ DNA in complex with RuvA. In the full resolvosome a probable DNA-RuvA(4)-RuvB(12)-RuvC(2) complex forms which resolves the HJ. It depends on Mg(2+) as a cofactor.

Its subcellular location is the cytoplasm. The catalysed reaction is Endonucleolytic cleavage at a junction such as a reciprocal single-stranded crossover between two homologous DNA duplexes (Holliday junction).. Its function is as follows. The RuvA-RuvB-RuvC complex processes Holliday junction (HJ) DNA during genetic recombination and DNA repair. Endonuclease that resolves HJ intermediates. Cleaves cruciform DNA by making single-stranded nicks across the HJ at symmetrical positions within the homologous arms, yielding a 5'-phosphate and a 3'-hydroxyl group; requires a central core of homology in the junction. The consensus cleavage sequence is 5'-(A/T)TT(C/G)-3'. Cleavage occurs on the 3'-side of the TT dinucleotide at the point of strand exchange. HJ branch migration catalyzed by RuvA-RuvB allows RuvC to scan DNA until it finds its consensus sequence, where it cleaves and resolves the cruciform DNA. This is Crossover junction endodeoxyribonuclease RuvC from Ectopseudomonas mendocina (strain ymp) (Pseudomonas mendocina).